Consider the following 352-residue polypeptide: Alanine racemase (352 aa).

Catalysis depends on Lys-33, which acts as the Proton acceptor; specific for D-alanine. Residue Lys-33 is modified to N6-(pyridoxal phosphate)lysine. Residue Arg-129 coordinates substrate. Tyr-250 acts as the Proton acceptor; specific for L-alanine in catalysis. Met-298 is a binding site for substrate.

It belongs to the alanine racemase family. Pyridoxal 5'-phosphate is required as a cofactor.

It carries out the reaction L-alanine = D-alanine. It participates in amino-acid biosynthesis; D-alanine biosynthesis; D-alanine from L-alanine: step 1/1. Functionally, catalyzes the interconversion of L-alanine and D-alanine. May also act on other amino acids. This chain is Alanine racemase (alr), found in Neisseria meningitidis serogroup C / serotype 2a (strain ATCC 700532 / DSM 15464 / FAM18).